A 160-amino-acid polypeptide reads, in one-letter code: Small ribosomal subunit protein uS7A (160 aa).

The protein belongs to the universal ribosomal protein uS7 family. Part of the 30S ribosomal subunit. Contacts proteins S9 and S11.

One of the primary rRNA binding proteins, it binds directly to 16S rRNA where it nucleates assembly of the head domain of the 30S subunit. Is located at the subunit interface close to the decoding center, probably blocks exit of the E-site tRNA. This is Small ribosomal subunit protein uS7A from Aquifex aeolicus (strain VF5).